A 320-amino-acid polypeptide reads, in one-letter code: Acetyl-coenzyme A carboxylase carboxyl transferase subunit alpha (320 aa).

The 255-residue stretch at 41–295 (RIEEKAGQAL…GEAIAQAFDE (255 aa)) folds into the CoA carboxyltransferase C-terminal domain.

This sequence belongs to the AccA family. In terms of assembly, acetyl-CoA carboxylase is a heterohexamer composed of biotin carboxyl carrier protein (AccB), biotin carboxylase (AccC) and two subunits each of ACCase subunit alpha (AccA) and ACCase subunit beta (AccD).

It localises to the cytoplasm. It carries out the reaction N(6)-carboxybiotinyl-L-lysyl-[protein] + acetyl-CoA = N(6)-biotinyl-L-lysyl-[protein] + malonyl-CoA. It participates in lipid metabolism; malonyl-CoA biosynthesis; malonyl-CoA from acetyl-CoA: step 1/1. Component of the acetyl coenzyme A carboxylase (ACC) complex. First, biotin carboxylase catalyzes the carboxylation of biotin on its carrier protein (BCCP) and then the CO(2) group is transferred by the carboxyltransferase to acetyl-CoA to form malonyl-CoA. In Bradyrhizobium sp. (strain BTAi1 / ATCC BAA-1182), this protein is Acetyl-coenzyme A carboxylase carboxyl transferase subunit alpha.